The sequence spans 406 residues: Putative odorant receptor 65b (406 aa).

At 1–55 (MDIQRFLKFYKVGWKTYRDPLMEASHSSIYYWREQMKAMALFTTTEERLLPYRSK) the chain is on the cytoplasmic side. A helical membrane pass occupies residues 56–76 (WHTLVYIQMVIFFASMSFGLT). Residues 77–88 (ESMGDHVQMGRD) are Extracellular-facing. Residues 89–109 (LAFILGAFFIIFKTYYFCWYG) form a helical membrane-spanning segment. The Cytoplasmic segment spans residues 110–144 (DELDQVISDLDALHPWAQKGPNPVEYQTGKRWYFV). Residues 145–165 (MAFFLATSWSFFLCILLLLLI) traverse the membrane as a helical segment. Over 166–218 (TSPMWVHQQNLPFHAAFPFQWHEKSLHPISHAIIYLFQSYFAVYCLTWLLCIE) the chain is Extracellular. Residues 219–239 (GLSICIYAEITFGIEVLCLEL) form a helical membrane-spanning segment. At 240–275 (RQIHRHNYGLQELRMETNRLVKLHQKIVEILDRTND) the chain is on the cytoplasmic side. The chain crosses the membrane as a helical span at residues 276 to 296 (VFHGTLIMQMGVNFSLVSLSV). At 297–307 (LEAVEARKDPK) the chain is on the extracellular side. The helical transmembrane segment at 308–328 (VVAQFAVLMLLALGHLSMWSY) threads the bilayer. Topologically, residues 329-381 (CGDQLSQKSLQISEAAYEAYDPTKGSKDVYRDLCVIIRRGQDPLIMRASPFPS) are cytoplasmic. The helical transmembrane segment at 382 to 402 (FNLINYSAILNQCYGILTFLL) threads the bilayer. At 403–406 (KTLD) the chain is on the extracellular side.

It belongs to the insect chemoreceptor superfamily. Heteromeric odorant receptor channel (TC 1.A.69) family. Or49a subfamily. In terms of assembly, interacts with Orco. Complexes exist early in the endomembrane system in olfactory sensory neurons (OSNs), coupling these complexes to the conserved ciliary trafficking pathway.

It is found in the cell membrane. Odorant receptor which mediates acceptance or avoidance behavior, depending on its substrates. The odorant receptor repertoire encodes a large collection of odor stimuli that vary widely in identity, intensity, and duration. May form a complex with Orco to form odorant-sensing units, providing sensitive and prolonged odorant signaling and calcium permeability. The protein is Putative odorant receptor 65b (Or65b) of Drosophila melanogaster (Fruit fly).